The chain runs to 339 residues: Anthranilate phosphoribosyltransferase (339 aa).

5-phospho-alpha-D-ribose 1-diphosphate contacts are provided by residues Gly-79, 82–83, Ser-87, 89–92, 107–115, and Ser-119; these read GD, NIST, and KHGNRSISS. An anthranilate-binding site is contributed by Gly-79. Ser-91 lines the Mg(2+) pocket. Asn-110 is a binding site for anthranilate. An anthranilate-binding site is contributed by Arg-165. The Mg(2+) site is built by Asp-224 and Glu-225.

Belongs to the anthranilate phosphoribosyltransferase family. Homodimer. Requires Mg(2+) as cofactor.

The catalysed reaction is N-(5-phospho-beta-D-ribosyl)anthranilate + diphosphate = 5-phospho-alpha-D-ribose 1-diphosphate + anthranilate. It functions in the pathway amino-acid biosynthesis; L-tryptophan biosynthesis; L-tryptophan from chorismate: step 2/5. Catalyzes the transfer of the phosphoribosyl group of 5-phosphorylribose-1-pyrophosphate (PRPP) to anthranilate to yield N-(5'-phosphoribosyl)-anthranilate (PRA). This Listeria innocua serovar 6a (strain ATCC BAA-680 / CLIP 11262) protein is Anthranilate phosphoribosyltransferase.